Consider the following 310-residue polypeptide: Isoflavone reductase homolog A622-like (310 aa).

Residues 13–19 (GGTGYIG), Arg38, and Lys47 each bind NADP(+). The Proton acceptor role is filled by Lys135. Arg139 provides a ligand contact to NADP(+).

This sequence belongs to the NmrA-type oxidoreductase family. Isoflavone reductase subfamily. In terms of assembly, monomer. In terms of tissue distribution, expressed in roots.

Its subcellular location is the cytoplasm. It functions in the pathway alkaloid biosynthesis; nicotine biosynthesis. Its function is as follows. Involved in the biosynthesis of pyridine alkaloid natural products, leading mainly to the production of anabasine, anatabine, nicotine and nornicotine, effective deterrents against herbivores with antiparasitic and pesticide properties (neurotoxins); nornicotine serves as the precursor in the synthesis of the carcinogen compound N'-nitrosonornicotine (NNN). Reductase that may be involved in a late step of tobacco alkaloid biosynthesis. Maybe involved in either the formation of a nicotinic acid-derived precursor or the final condensation reaction of tobacco alkaloids. The polypeptide is Isoflavone reductase homolog A622-like (Nicotiana tabacum (Common tobacco)).